A 342-amino-acid polypeptide reads, in one-letter code: Isopentenyl-diphosphate delta-isomerase (342 aa).

11-12 serves as a coordination point for substrate; sequence RK. FMN contacts are provided by residues S68, 69–71, S99, and N127; that span reads SMT. 99 to 101 lines the substrate pocket; it reads SMR. Mg(2+) is bound at residue E163. FMN-binding positions include K194, T224, and 295 to 296; that span reads AG.

This sequence belongs to the IPP isomerase type 2 family. Homooctamer. Dimer of tetramers. FMN serves as cofactor. It depends on NADPH as a cofactor. Requires Mg(2+) as cofactor.

It is found in the cytoplasm. It carries out the reaction isopentenyl diphosphate = dimethylallyl diphosphate. Involved in the biosynthesis of isoprenoids. Catalyzes the 1,3-allylic rearrangement of the homoallylic substrate isopentenyl (IPP) to its allylic isomer, dimethylallyl diphosphate (DMAPP). The polypeptide is Isopentenyl-diphosphate delta-isomerase (Rickettsia typhi (strain ATCC VR-144 / Wilmington)).